A 372-amino-acid chain; its full sequence is Secreted beta-glucosidase SIM1 (372 aa).

Residues 1 to 15 (MKYLTLLTVLSTALA) form the signal peptide. The disordered stretch occupies residues 51–85 (VTENASSGASSGETAETIQTRSSSDVSSSSDSNPV). The segment covering 52–85 (TENASSGASSGETAETIQTRSSSDVSSSSDSNPV) has biased composition (low complexity). Residues N54 and N351 are each glycosylated (N-linked (GlcNAc...) asparagine).

Belongs to the SUN family.

Its subcellular location is the secreted. The protein localises to the cell wall. In terms of biological role, cell surface beta-glucosidase involved in cell wall maintenance and cytokinesis. Plays a role redundant to SUN41. The polypeptide is Secreted beta-glucosidase SIM1 (SIM1) (Candida albicans (strain SC5314 / ATCC MYA-2876) (Yeast)).